The chain runs to 129 residues: Small ribosomal subunit protein uS11 (129 aa).

This sequence belongs to the universal ribosomal protein uS11 family. Part of the 30S ribosomal subunit. Interacts with proteins S7 and S18. Binds to IF-3.

Located on the platform of the 30S subunit, it bridges several disparate RNA helices of the 16S rRNA. Forms part of the Shine-Dalgarno cleft in the 70S ribosome. This is Small ribosomal subunit protein uS11 from Desulfitobacterium hafniense (strain DSM 10664 / DCB-2).